A 331-amino-acid polypeptide reads, in one-letter code: Cilia- and flagella-associated protein 119 (331 aa).

Ser-34 is subject to Phosphoserine. 2 disordered regions span residues Leu-236 to Glu-271 and Ser-309 to Lys-331. A coiled-coil region spans residues Val-286 to Arg-317.

The protein localises to the cell projection. It localises to the cilium. The protein resides in the flagellum. It is found in the cytoplasmic vesicle. Its subcellular location is the secretory vesicle. The protein localises to the acrosome. It localises to the cytoplasm. The protein is Cilia- and flagella-associated protein 119 of Homo sapiens (Human).